The sequence spans 937 residues: Calsyntenin-2 (937 aa).

The N-terminal stretch at 1 to 22 is a signal peptide; sequence MKMRAITAMLLLVLSGQCGILA. At 23 to 818 the chain is on the extracellular side; it reads GKVNKHKPWI…NSDHISGTPP (796 aa). Cadherin domains follow at residues 32–148 and 149–249; these read IETS…SPVF and REPL…KPGW. Asn-86 carries N-linked (GlcNAc...) asparagine glycosylation. Asn-330, Asn-365, and Asn-716 each carry an N-linked (GlcNAc...) asparagine glycan. A helical transmembrane segment spans residues 819-839; sequence AATVVIVMCIAALVVIVVLGI. Residues 840–937 are Cytoplasmic-facing; sequence YRIHTTHQDS…LEWDPSTLPY (98 aa). The interval 846–937 is disordered; it reads HQDSSKEDEE…LEWDPSTLPY (92 aa). The segment covering 865 to 874 has biased composition (polar residues); sequence DNSNLNSIEG. 2 stretches are compositionally biased toward acidic residues: residues 881-900 and 907-917; these read VREE…DDLA and ESEDSDEDEET.

This sequence belongs to the calsyntenin family. Homooligomer and heterooligomer; mediates both homophilic and heterophilc interactions with clstn1 and clstn3 paralogs via cadherin domains. By 48 hours post-fertilization (hpf), widely expressed in the brain, with strong expression in the telencephalon and the midbrain.

Its subcellular location is the postsynaptic cell membrane. The protein localises to the endoplasmic reticulum membrane. It is found in the golgi apparatus membrane. The protein resides in the cell projection. It localises to the dendrite. Postsynaptic adhesion molecule. Promotes synapse development by acting as a cell adhesion molecule at the postsynaptic membrane, which associates with presynaptic neurexins. This chain is Calsyntenin-2 (clstn2a), found in Danio rerio (Zebrafish).